The primary structure comprises 339 residues: FR-33289 synthase (339 aa).

3 residues coordinate Fe(2+): histidine 150, aspartate 152, and histidine 288.

Belongs to the TfdA dioxygenase family. Homodimer. The cofactor is Fe(2+).

It catalyses the reaction 3-(N-acetyl-N-hydroxy)aminopropylphosphonate + 2-oxoglutarate + O2 = (R)-(3-(acetylhydroxyamino)-2-hydroxypropyl)phosphonate + succinate + CO2. It functions in the pathway antibiotic biosynthesis. Functionally, monooxygenase involved in the biosynthesis of the phosphonate antibiotic FR-33289, an antimalarial agent. Catalyzes the oxidative decarboxylation of the antibiotic FR-900098 (3-(N-acetyl-N-hydroxy)aminopropylphosphonate) to form FR-33289 ((R)-(3-(acetylhydroxyamino)-2-hydroxypropyl)phosphonate). This Streptomyces rubellomurinus (strain ATCC 31215) protein is FR-33289 synthase.